The primary structure comprises 82 residues: Large ribosomal subunit protein uL23 (82 aa).

This sequence belongs to the universal ribosomal protein uL23 family. In terms of assembly, part of the 50S ribosomal subunit. Contacts protein L29.

Its function is as follows. Binds to 23S rRNA. One of the proteins that surrounds the polypeptide exit tunnel on the outside of the ribosome. This Methanosarcina barkeri (strain Fusaro / DSM 804) protein is Large ribosomal subunit protein uL23.